The primary structure comprises 356 residues: Glycerol-1-phosphate dehydrogenase [NAD(P)+] (356 aa).

NAD(+) contacts are provided by residues 103–107 (GRSID) and 125–128 (TAAS). A substrate-binding site is contributed by D130. S134 provides a ligand contact to NAD(+). D177 is a substrate binding site. 2 residues coordinate Zn(2+): D177 and H257. A substrate-binding site is contributed by H261. A Zn(2+)-binding site is contributed by H273.

It belongs to the glycerol-1-phosphate dehydrogenase family. Requires Zn(2+) as cofactor.

The protein resides in the cytoplasm. The enzyme catalyses sn-glycerol 1-phosphate + NAD(+) = dihydroxyacetone phosphate + NADH + H(+). It carries out the reaction sn-glycerol 1-phosphate + NADP(+) = dihydroxyacetone phosphate + NADPH + H(+). It participates in membrane lipid metabolism; glycerophospholipid metabolism. Functionally, catalyzes the NAD(P)H-dependent reduction of dihydroxyacetonephosphate (DHAP or glycerone phosphate) to glycerol 1-phosphate (G1P). The G1P thus generated is used as the glycerophosphate backbone of phospholipids in the cellular membranes of Archaea. In Methanosarcina barkeri (strain Fusaro / DSM 804), this protein is Glycerol-1-phosphate dehydrogenase [NAD(P)+].